A 422-amino-acid chain; its full sequence is Serine protease HTRA2, mitochondrial (422 aa).

The transit peptide at 1–17 directs the protein to the mitochondrion; it reads MALRGSHRLEVIFKRCI. Residues 18–74 constitute a propeptide that is removed on maturation; the sequence is ASPVFHSHAANRRSSQLAIKGTDPSSNGNSGQDQQNGEQKAKGWRRLVRFFVPFSLG. The span at 29–55 shows a compositional bias: polar residues; it reads RRSSQLAIKGTDPSSNGNSGQDQQNGE. The tract at residues 29 to 56 is disordered; it reads RRSSQLAIKGTDPSSNGNSGQDQQNGEQ. A helical transmembrane segment spans residues 64-82; it reads LVRFFVPFSLGAAVSAAVI. 2 consecutive short sequence motifs (IAP-binding) follow at residues 75–78 and 94–97; these read AAVS and SKMT. The interval 139 to 302 is serine protease; sequence SNGSGFIIEQ…IPIDYVKVFL (164 aa). Active-site charge relay system residues include H157, D189, and S266. Positions 325–410 constitute a PDZ domain; that stretch reads MGITMLTLTP…NLDIVILRGV (86 aa).

This sequence belongs to the peptidase S1C family. Interacts with th/DIAP1 (via BIR 2 domain).

Its subcellular location is the mitochondrion intermembrane space. It localises to the mitochondrion membrane. It carries out the reaction Cleavage of non-polar aliphatic amino-acids at the P1 position, with a preference for Val, Ile and Met. At the P2 and P3 positions, Arg is selected most strongly with a secondary preference for other hydrophilic residues.. Functionally, serine protease that shows proteolytic activity against a non-specific substrate beta-casein. Promotes or induces cell death either by direct binding to and inhibition of BIRC proteins (also called inhibitor of apoptosis proteins, IAPs), leading to an increase in caspase activity, or by a BIRC inhibition-independent, caspase-independent and serine protease activity-dependent mechanism. Can antagonize antiapoptotic activity of th/Diap1 by directly inducing the degradation of th/Diap1. This is Serine protease HTRA2, mitochondrial from Drosophila yakuba (Fruit fly).